The following is an 891-amino-acid chain: von Willebrand factor A domain-containing protein 7 (891 aa).

Positions 1–28 (MLPTEVPQSHPGPSALLLLQLLLPPTSA) are cleaved as a signal peptide. Asn55 is a glycosylation site (N-linked (GlcNAc...) asparagine). The disordered stretch occupies residues 237–272 (PKPPGKCSHGGHFDRSSSQPPRGGINKDSTSPGFSP). The VWFA domain maps to 313–506 (ASSLSFVLDT…SMAALVTLPL (194 aa)).

Expressed at low level in different cell lines.

It is found in the secreted. This chain is von Willebrand factor A domain-containing protein 7 (VWA7), found in Homo sapiens (Human).